The chain runs to 593 residues: PiggyBac transposable element-derived protein 3 (593 aa).

2 disordered regions span residues Ile27–Leu53 and Ser69–Arg105. Over residues Ser38–Gly47 the composition is skewed to acidic residues. Ser86 is modified (phosphoserine).

Expressed in heart and oocytes, but not in granulosa cells (at protein level).

It is found in the nucleus. Functionally, binds in vitro to PGBD3-related transposable elements, called MER85s; these non-autonomous 140 bp elements are characterized by the presence of PGBD3 terminal inverted repeats and the absence of internal transposase ORF. The polypeptide is PiggyBac transposable element-derived protein 3 (PGBD3) (Homo sapiens (Human)).